The primary structure comprises 630 residues: uncharacterized protein (630 aa).

The next 4 helical transmembrane spans lie at 254–274 (MFYA…ELRV), 504–524 (IALL…LTSI), 564–584 (MIFA…SMVF), and 601–621 (IIVI…AVLF).

The protein resides in the cell membrane. This is an uncharacterized protein from Mycoplasma genitalium (strain ATCC 33530 / DSM 19775 / NCTC 10195 / G37) (Mycoplasmoides genitalium).